The following is a 349-amino-acid chain: MVGIALLGAGIFAREQHLPAIESVGHLNLKAVYSRSEEAAISLAKQARDRVDIYFDSPPTSGRSLDDLLARSDIAAVAACATILVQPLLIRKALRAGKHVLSEKPIAQDTATAMGLVQWYSSQSSPPIWAVAENFRFNESLRYAEMRTQEIGGELASFRLTYYGLIRKENKYFKTEWRKTPEFQGGFLLDSGIHFIASLRLLLRAVGQEPKEVMALSSLLKEHLHPVDTIHAVVSTIDSRHGTVCISFGVEHISTLEIEIISTRGVIVWTPVSVTSIIKSDSGESMNEKKEFIYNNGVKAEFEAFCQAILQNSPDPRQSPLEALRDLALLQSLLGSAACDGSMKLVKFE.

Belongs to the Gfo/Idh/MocA family.

Its pathway is secondary metabolite biosynthesis. In terms of biological role, dehydrogenase; part of the gene cluster that mediates the biosynthesis of the gamma-pyrones fusapyrone (FPY) and deoxyfusapyrone (dFPY). FPY is an undecaketide and thus likely synthesized by the polyketide synthase FPY1 from acetyl-CoA functioning as starter unit and the addition of 10 malonyl-CoA extender units by successive Claisen-condensations. Next to this, FPY shares some rare features: C-glycosylated 4-deoxyglucose at C-3, a gem-dimethyl group at C-13, and an alpha-beta to beta-gamma double bond shift at C-20. During FPY biosynthesis mono-C-methyl groups are transferred to the tetra-, penta-, hexa- and heptaketide, while two C-methyl groups are transferred to the nonaketide, suggesting that the CMet domain is programmed to selectively catalyze two successive C-alpha-methylation reactions of the nonaketide, while other alpha-carbons are non- or mono-methylated only. While the origin of the 4'-deoxyglucose moiety remains opaque, its transfer to C-3 is most likely mediated by the C-glycosyltransferase FPY2. Next to this, the hydroxyl group present at C-33 and discriminating between FPY and dFPY, is likely to be installed by the cytochrome P450 monooxygenase FPY7. No putative function can be predicted for the remaining genes FPY3-FPY6. This Fusarium mangiferae (Mango malformation disease fungus) protein is Dehydrogenase FPY6.